The sequence spans 497 residues: Proline--tRNA ligase (497 aa).

This sequence belongs to the class-II aminoacyl-tRNA synthetase family. ProS type 3 subfamily. Homodimer.

The protein resides in the cytoplasm. It catalyses the reaction tRNA(Pro) + L-proline + ATP = L-prolyl-tRNA(Pro) + AMP + diphosphate. Its function is as follows. Catalyzes the attachment of proline to tRNA(Pro) in a two-step reaction: proline is first activated by ATP to form Pro-AMP and then transferred to the acceptor end of tRNA(Pro). In Bacteroides fragilis (strain ATCC 25285 / DSM 2151 / CCUG 4856 / JCM 11019 / LMG 10263 / NCTC 9343 / Onslow / VPI 2553 / EN-2), this protein is Proline--tRNA ligase.